The chain runs to 413 residues: uncharacterized protein (413 aa).

An N-terminal signal peptide occupies residues 1-20 (MRVIIVIMMVVFVVVGTSSG).

This is an uncharacterized protein from Archaeoglobus fulgidus (strain ATCC 49558 / DSM 4304 / JCM 9628 / NBRC 100126 / VC-16).